We begin with the raw amino-acid sequence, 99 residues long: MKTVYYKEITYQQYLQLQPEQQEKYLALCQKDFEQETERIAFDRQGGVPGIARKFAQEEVAWFDRVTTWSYMNAYIPSYRRRRNLLKIDMLKMSNAEEY.

This is an uncharacterized protein from Saccharomyces cerevisiae (strain ATCC 204508 / S288c) (Baker's yeast).